We begin with the raw amino-acid sequence, 249 residues long: Enolase-phosphatase E1 (249 aa).

Mg(2+) contacts are provided by D14 and E16. Substrate contacts are provided by residues 141 to 142 and K175; that span reads SS. Residue D200 coordinates Mg(2+).

It belongs to the HAD-like hydrolase superfamily. MasA/MtnC family. In terms of assembly, monomer. The cofactor is Mg(2+).

Its subcellular location is the cytoplasm. The protein resides in the nucleus. The enzyme catalyses 5-methylsulfanyl-2,3-dioxopentyl phosphate + H2O = 1,2-dihydroxy-5-(methylsulfanyl)pent-1-en-3-one + phosphate. Its pathway is amino-acid biosynthesis; L-methionine biosynthesis via salvage pathway; L-methionine from S-methyl-5-thio-alpha-D-ribose 1-phosphate: step 3/6. It functions in the pathway amino-acid biosynthesis; L-methionine biosynthesis via salvage pathway; L-methionine from S-methyl-5-thio-alpha-D-ribose 1-phosphate: step 4/6. Its function is as follows. Bifunctional enzyme that catalyzes the enolization of 2,3-diketo-5-methylthiopentyl-1-phosphate (DK-MTP-1-P) into the intermediate 2-hydroxy-3-keto-5-methylthiopentenyl-1-phosphate (HK-MTPenyl-1-P), which is then dephosphorylated to form the acireductone 1,2-dihydroxy-3-keto-5-methylthiopentene (DHK-MTPene). The sequence is that of Enolase-phosphatase E1 from Drosophila mojavensis (Fruit fly).